Consider the following 62-residue polypeptide: Photosystem II reaction center protein Z (62 aa).

The next 2 membrane-spanning stretches (helical) occupy residues 8–28 (AVFASIAIPFILVIGVPVVLA) and 41–61 (FSGASSWIGLVFLVGILNSLI).

This sequence belongs to the PsbZ family. In terms of assembly, PSII is composed of 1 copy each of membrane proteins PsbA, PsbB, PsbC, PsbD, PsbE, PsbF, PsbH, PsbI, PsbJ, PsbK, PsbL, PsbM, PsbT, PsbY, PsbZ, Psb30/Ycf12, at least 3 peripheral proteins of the oxygen-evolving complex and a large number of cofactors. It forms dimeric complexes.

The protein localises to the plastid. The protein resides in the chloroplast thylakoid membrane. Functionally, may control the interaction of photosystem II (PSII) cores with the light-harvesting antenna, regulates electron flow through the 2 photosystem reaction centers. PSII is a light-driven water plastoquinone oxidoreductase, using light energy to abstract electrons from H(2)O, generating a proton gradient subsequently used for ATP formation. In Huperzia lucidula (Shining clubmoss), this protein is Photosystem II reaction center protein Z.